Here is a 249-residue protein sequence, read N- to C-terminus: tRNA (guanine-N(1)-)-methyltransferase (249 aa).

Residues Gly112 and Leu132–Leu137 each bind S-adenosyl-L-methionine.

Belongs to the RNA methyltransferase TrmD family. In terms of assembly, homodimer.

It localises to the cytoplasm. It carries out the reaction guanosine(37) in tRNA + S-adenosyl-L-methionine = N(1)-methylguanosine(37) in tRNA + S-adenosyl-L-homocysteine + H(+). In terms of biological role, specifically methylates guanosine-37 in various tRNAs. The protein is tRNA (guanine-N(1)-)-methyltransferase of Citrifermentans bemidjiense (strain ATCC BAA-1014 / DSM 16622 / JCM 12645 / Bem) (Geobacter bemidjiensis).